Consider the following 262-residue polypeptide: Adenosylcobinamide-GDP ribazoletransferase (262 aa).

6 helical membrane passes run 43-63 (YFGLVGLLVGLLSAIIFWLTQ), 66-86 (LPAGVSVLLSMLTGILLTGGF), 120-140 (GALALIMVLLLKWQLLVELAL), 146-166 (AGSAMIVAHTVSRVVAASLIF), 191-211 (LFILIASGVLVLLVLKGIAAL), and 242-262 (AAQQICEIVCYFVLLVVGGIL).

The protein belongs to the CobS family. The cofactor is Mg(2+).

The protein resides in the cell inner membrane. It catalyses the reaction alpha-ribazole + adenosylcob(III)inamide-GDP = adenosylcob(III)alamin + GMP + H(+). It carries out the reaction alpha-ribazole 5'-phosphate + adenosylcob(III)inamide-GDP = adenosylcob(III)alamin 5'-phosphate + GMP + H(+). It participates in cofactor biosynthesis; adenosylcobalamin biosynthesis; adenosylcobalamin from cob(II)yrinate a,c-diamide: step 7/7. Functionally, joins adenosylcobinamide-GDP and alpha-ribazole to generate adenosylcobalamin (Ado-cobalamin). Also synthesizes adenosylcobalamin 5'-phosphate from adenosylcobinamide-GDP and alpha-ribazole 5'-phosphate. The protein is Adenosylcobinamide-GDP ribazoletransferase of Shewanella oneidensis (strain ATCC 700550 / JCM 31522 / CIP 106686 / LMG 19005 / NCIMB 14063 / MR-1).